Consider the following 122-residue polypeptide: Large ribosomal subunit protein uL14 (122 aa).

It belongs to the universal ribosomal protein uL14 family. In terms of assembly, part of the 50S ribosomal subunit. Forms a cluster with proteins L3 and L19. In the 70S ribosome, L14 and L19 interact and together make contacts with the 16S rRNA in bridges B5 and B8.

In terms of biological role, binds to 23S rRNA. Forms part of two intersubunit bridges in the 70S ribosome. The polypeptide is Large ribosomal subunit protein uL14 (Fervidobacterium nodosum (strain ATCC 35602 / DSM 5306 / Rt17-B1)).